The sequence spans 1111 residues: Receptor-type guanylate cyclase gcy-7 (1111 aa).

The signal sequence occupies residues 1–24 (MKPFYSMSLVLFLVITLLPKPMFP). Residues 25–488 (QVATGTTGNV…CPKSFVDEYL (464 aa)) lie on the Extracellular side of the membrane. Residues Asn-80, Asn-300, Asn-326, Asn-353, Asn-389, Asn-407, Asn-430, and Asn-441 are each glycosylated (N-linked (GlcNAc...) asparagine). The chain crosses the membrane as a helical span at residues 489–509 (IWVIVAIVVLFLAITAAACGI). Topologically, residues 510–1111 (YFSIQARRQE…TLKSDEQLSD (602 aa)) are cytoplasmic. A Protein kinase domain is found at 536–838 (QINSKQKGKG…NDNLMDHVFN (303 aa)). ATP is bound by residues 542–550 (KGKGEHSVR) and Lys-568. A Guanylate cyclase domain is found at 896–1026 (TIFFSDVVQF…DAVNTASRME (131 aa)).

Belongs to the adenylyl cyclase class-4/guanylyl cyclase family. In terms of tissue distribution, expressed asymmetrically in ASE left (ASEL) sensory neuron. Expressed in excretory canal cell.

It is found in the cell membrane. The catalysed reaction is GTP = 3',5'-cyclic GMP + diphosphate. Functionally, guanylate cyclase involved in the production of the second messenger cGMP. Unlike other guanylate cyclases expressed in ASE neurons, may not play a role in chemotaxis responses toward salt ions in ASEL (ASE left) sensory neurons. This Caenorhabditis elegans protein is Receptor-type guanylate cyclase gcy-7.